The following is an 842-amino-acid chain: Circularly permutated Ras protein 1 (842 aa).

Residues Asp62–Gln66, Asn121–Asp124, and Gly181–Ser188 contribute to the GTP site. A disordered region spans residues Ser253 to Gly274. A compositionally biased stretch (polar residues) spans Pro259–Gly274. Positions Ile377–Val627 constitute a VWFA domain.

The protein belongs to the small GTPase superfamily. CpRas family.

This Dictyostelium discoideum (Social amoeba) protein is Circularly permutated Ras protein 1 (cpras1).